Consider the following 570-residue polypeptide: Glutamate--tRNA ligase (570 aa).

The short motif at 107 to 117 is the 'HIGH' region element; it reads PNPDFVLHLGS.

This sequence belongs to the class-I aminoacyl-tRNA synthetase family. Glutamate--tRNA ligase type 2 subfamily.

It is found in the cytoplasm. The catalysed reaction is tRNA(Glu) + L-glutamate + ATP = L-glutamyl-tRNA(Glu) + AMP + diphosphate. Functionally, catalyzes the attachment of glutamate to tRNA(Glu) in a two-step reaction: glutamate is first activated by ATP to form Glu-AMP and then transferred to the acceptor end of tRNA(Glu). The polypeptide is Glutamate--tRNA ligase (Pyrobaculum islandicum (strain DSM 4184 / JCM 9189 / GEO3)).